A 259-amino-acid chain; its full sequence is Ubiquinone/menaquinone biosynthesis C-methyltransferase UbiE (259 aa).

Residues T82, D103, 131-132, and S148 each bind S-adenosyl-L-methionine; that span reads NA.

Belongs to the class I-like SAM-binding methyltransferase superfamily. MenG/UbiE family.

It catalyses the reaction a 2-demethylmenaquinol + S-adenosyl-L-methionine = a menaquinol + S-adenosyl-L-homocysteine + H(+). The enzyme catalyses a 2-methoxy-6-(all-trans-polyprenyl)benzene-1,4-diol + S-adenosyl-L-methionine = a 5-methoxy-2-methyl-3-(all-trans-polyprenyl)benzene-1,4-diol + S-adenosyl-L-homocysteine + H(+). Its pathway is quinol/quinone metabolism; menaquinone biosynthesis; menaquinol from 1,4-dihydroxy-2-naphthoate: step 2/2. It participates in cofactor biosynthesis; ubiquinone biosynthesis. Methyltransferase required for the conversion of demethylmenaquinol (DMKH2) to menaquinol (MKH2) and the conversion of 2-polyprenyl-6-methoxy-1,4-benzoquinol (DDMQH2) to 2-polyprenyl-3-methyl-6-methoxy-1,4-benzoquinol (DMQH2). The chain is Ubiquinone/menaquinone biosynthesis C-methyltransferase UbiE from Vibrio campbellii (strain ATCC BAA-1116).